The primary structure comprises 472 residues: Uronate isomerase (472 aa).

This sequence belongs to the metallo-dependent hydrolases superfamily. Uronate isomerase family.

The catalysed reaction is D-glucuronate = D-fructuronate. The enzyme catalyses aldehydo-D-galacturonate = keto-D-tagaturonate. The protein operates within carbohydrate metabolism; pentose and glucuronate interconversion. The sequence is that of Uronate isomerase from Xanthomonas axonopodis pv. citri (strain 306).